Here is a 182-residue protein sequence, read N- to C-terminus: Interferon gamma 1 (182 aa).

Residues 1–21 (MIAQNMTIFFWGVCLLTSGWA) form the signal peptide. The N-linked (GlcNAc...) asparagine glycan is linked to Asn93.

The protein belongs to the type II (or gamma) interferon family. In terms of assembly, homodimer. In terms of tissue distribution, highly expressed in spleen. Also detected at lower levels in brain, gill, kidney, heart, intestine and muscle. In immune cell populations, has highest expression in peripheral blood leukocytes and splenocytes. Detected in kidney-derived monocytes, neutrophils, macrophages and leukocytes.

It localises to the secreted. In terms of biological role, cytokine which binds to interferon gamma receptor 1-like (ifngr1l). Has activating effects on primary macrophages and neutrophils. Induces nitric oxide production and phagocytic responses in macrophages. Primes macrophages and neutrophils for production of reactive oxygen intermediates (ROI). Stimulates phosphorylation and nuclear localization of the JAK/STAT signal transducer stat1. Promotes increased expression of a number of genes important for macrophage activity, including the interferon regulatory factors irf1, irf2, irf8 and irf9. In Carassius auratus (Goldfish), this protein is Interferon gamma 1.